The sequence spans 156 residues: Probable cyclic pyranopterin monophosphate synthase (156 aa).

109–110 (MD) contributes to the substrate binding site. D124 is a catalytic residue.

Belongs to the MoaC family. Homohexamer; trimer of dimers.

It carries out the reaction (8S)-3',8-cyclo-7,8-dihydroguanosine 5'-triphosphate = cyclic pyranopterin phosphate + diphosphate. Its pathway is cofactor biosynthesis; molybdopterin biosynthesis. Functionally, catalyzes the conversion of (8S)-3',8-cyclo-7,8-dihydroguanosine 5'-triphosphate to cyclic pyranopterin monophosphate (cPMP). This Methanopyrus kandleri (strain AV19 / DSM 6324 / JCM 9639 / NBRC 100938) protein is Probable cyclic pyranopterin monophosphate synthase.